A 561-amino-acid chain; its full sequence is Trehalose-6-phosphate hydrolase (561 aa).

The active-site Nucleophile is aspartate 203. The active-site Proton donor is glutamate 254.

The protein belongs to the glycosyl hydrolase 13 family.

Its subcellular location is the cytoplasm. The catalysed reaction is alpha,alpha-trehalose 6-phosphate + H2O = D-glucose 6-phosphate + D-glucose. Activity is stimulated by high salt concentrations with different efficiencies depending on the kind of salt. In vitro, inhibited by glucose. In terms of biological role, hydrolyzes trehalose-6-phosphate to glucose and glucose 6-phosphate. Can also very effectively hydrolyze p-nitrophenyl-alpha-D-glucopyranoside, but not lactose, maltose, sucrose or sucrose-6-phosphate. Trehalose is also hydrolyzed, but to a much smaller extent than trehalose-6-phosphate. This is Trehalose-6-phosphate hydrolase from Bacillus subtilis (strain 168).